A 272-amino-acid polypeptide reads, in one-letter code: 3-methyl-2-oxobutanoate hydroxymethyltransferase (272 aa).

Positions 51 and 90 each coordinate Mg(2+). Residues 51 to 52 (DS), aspartate 90, and lysine 118 each bind 3-methyl-2-oxobutanoate. Residue glutamate 120 coordinates Mg(2+). Glutamate 187 serves as the catalytic Proton acceptor.

This sequence belongs to the PanB family. In terms of assembly, homodecamer; pentamer of dimers. The cofactor is Mg(2+).

The protein resides in the cytoplasm. It catalyses the reaction 3-methyl-2-oxobutanoate + (6R)-5,10-methylene-5,6,7,8-tetrahydrofolate + H2O = 2-dehydropantoate + (6S)-5,6,7,8-tetrahydrofolate. The protein operates within cofactor biosynthesis; (R)-pantothenate biosynthesis; (R)-pantoate from 3-methyl-2-oxobutanoate: step 1/2. Catalyzes the reversible reaction in which hydroxymethyl group from 5,10-methylenetetrahydrofolate is transferred onto alpha-ketoisovalerate to form ketopantoate. In Xylella fastidiosa (strain M23), this protein is 3-methyl-2-oxobutanoate hydroxymethyltransferase.